The sequence spans 361 residues: Lactate-binding periplasmic protein TTHA0766 (361 aa).

Positions 1-22 (MKRVSRRAFLRRLGVGVAATAA) form a signal peptide, tat-type signal. Substrate-binding residues include Y101, N158, and R178. N158 contacts Ca(2+). Ca(2+) is bound by residues D216, F217, and Q247. Substrate is bound by residues F217 and 247–250 (QPVD).

The protein belongs to the bacterial solute-binding protein 7 family. As to quaternary structure, homodimer. The complex comprises the extracytoplasmic solute receptor protein TTHA0766, and the two putative transmembrane proteins TTHA0767 and TTHA0768.

The protein resides in the periplasm. In terms of biological role, part of the tripartite ATP-independent periplasmic (TRAP) transport system involved in the uptake of lactate. This protein specifically binds L-lactate. This Thermus thermophilus (strain ATCC 27634 / DSM 579 / HB8) protein is Lactate-binding periplasmic protein TTHA0766.